The following is a 285-amino-acid chain: Small ribosomal subunit protein uS2 (285 aa).

A disordered region spans residues 231–285; that stretch reads GGKSGQAAAEPMAEWERELLEQHNAQQAEQAEAPAAEAPAEPAEAPAAEAAPQGE. The segment covering 255-285 has biased composition (low complexity); it reads AQQAEQAEAPAAEAPAEPAEAPAAEAAPQGE.

This sequence belongs to the universal ribosomal protein uS2 family.

This chain is Small ribosomal subunit protein uS2, found in Micrococcus luteus (strain ATCC 4698 / DSM 20030 / JCM 1464 / CCM 169 / CCUG 5858 / IAM 1056 / NBRC 3333 / NCIMB 9278 / NCTC 2665 / VKM Ac-2230) (Micrococcus lysodeikticus).